Here is a 172-residue protein sequence, read N- to C-terminus: Small t antigen (172 aa).

An N-acetylmethionine; by host modification is found at methionine 1. Residues 12–75 (ELMDLLGLDR…VKVAHQPDFG (64 aa)) enclose the J domain. A C4-type; atypical zinc finger spans residues 101–114 (CATNPSVHCPCLMC). The H1C3-type; atypical zinc finger occupies 120–141 (HRNRKFLRSSPLVWIDCYCFDC).

Interacts with host PPP2R1A; the interaction inhibits PP2A activity. Interacts with agnoprotein; this interaction prevents agnoprotein dephosphorylation by host PP2A. Interacts with host RBL1 and RBL2. Interacts with SMARCA5. Interacts with SDHB.

It is found in the host cytoplasm. Its subcellular location is the host nucleus. In terms of biological role, promotes efficient viral genome replication by modulating several host signaling pathways including transport network, interferon production or cell cycle progression. Inhibits host PP2A phosphatase activity and thereby prevents agnoprotein dephosphorylation. Inactivation of PP2A also results in the transactivation of cyclin A and cyclin D1 promoters. In addition, antagonizes the RIGI-mediated IFN response through interaction with E3 ligase TRIM25 leading to the inhibition of 'Lys-63'-linked ubiquitination of RIGI. Inhibits nucleotide excision repair (NER) pathway which leads to DNA strand breaks during DNA replication and micronuclei formation. In JC polyomavirus (JCPyV), this protein is Small t antigen.